A 186-amino-acid polypeptide reads, in one-letter code: Protein GrpE (186 aa).

This sequence belongs to the GrpE family. As to quaternary structure, homodimer.

The protein localises to the cytoplasm. Participates actively in the response to hyperosmotic and heat shock by preventing the aggregation of stress-denatured proteins, in association with DnaK and GrpE. It is the nucleotide exchange factor for DnaK and may function as a thermosensor. Unfolded proteins bind initially to DnaJ; upon interaction with the DnaJ-bound protein, DnaK hydrolyzes its bound ATP, resulting in the formation of a stable complex. GrpE releases ADP from DnaK; ATP binding to DnaK triggers the release of the substrate protein, thus completing the reaction cycle. Several rounds of ATP-dependent interactions between DnaJ, DnaK and GrpE are required for fully efficient folding. The protein is Protein GrpE of Novosphingobium aromaticivorans (strain ATCC 700278 / DSM 12444 / CCUG 56034 / CIP 105152 / NBRC 16084 / F199).